A 217-amino-acid chain; its full sequence is Ran-binding protein 1 homolog b (217 aa).

Disordered regions lie at residues 1-32 (MASI…QVAP) and 160-217 (ESEE…VPSA). Alanine 2 is modified (N-acetylalanine). Residues 14-26 (DEEETGANEDEDT) are compositionally biased toward acidic residues. Positions 29–164 (QVAPIVRLEE…FKEVAESEEE (136 aa)) constitute a RanBD1 domain. The segment covering 181-217 (LTVEEKESEKKPVEKAEENKKSEAVEEKKTEESVPSA) has biased composition (basic and acidic residues).

As to quaternary structure, interacts with the GTP-bound form of RAN1, RAN2 and RAN3.

Its subcellular location is the nucleus. It localises to the nuclear pore complex. This Arabidopsis thaliana (Mouse-ear cress) protein is Ran-binding protein 1 homolog b (RANBP1B).